The chain runs to 129 residues: Profilin-4 (129 aa).

It belongs to the profilin family. As to expression, expressed in testis, in germ cells in seminiferous tubules (at protein level).

It is found in the cytoplasm. Functionally, involved in male fertility. Required for manchette development and acrosome biogenesis during spermiogenesis. Binds in vitro to phospholipids, including phosphatidylinositol 3-phosphate (PtdIns(3)P), phosphatidylinositol 4,5-bisphosphate (PtdIns(4,5)P2), phosphatidylinositol 4-phosphate (PtdIns(4)P) and phosphatidic acid (PA). Contrary to other profilin family members, does not bind to actin in vitro. In Mus musculus (Mouse), this protein is Profilin-4 (Pfn4).